Reading from the N-terminus, the 86-residue chain is Large ribosomal subunit protein uL23 (86 aa).

Belongs to the universal ribosomal protein uL23 family. In terms of assembly, part of the 50S ribosomal subunit. Contacts protein L29.

Functionally, binds to 23S rRNA. One of the proteins that surrounds the polypeptide exit tunnel on the outside of the ribosome. In Thermococcus gammatolerans (strain DSM 15229 / JCM 11827 / EJ3), this protein is Large ribosomal subunit protein uL23.